Consider the following 370-residue polypeptide: Queuine tRNA-ribosyltransferase (370 aa).

Asp89 serves as the catalytic Proton acceptor. Substrate contacts are provided by residues 89–93, Asp143, Gln185, and Gly212; that span reads DSGGF. The tract at residues 243 to 249 is RNA binding; the sequence is GVGKPED. The Nucleophile role is filled by Asp262. The interval 267–271 is RNA binding; important for wobble base 34 recognition; the sequence is TRNAR. Zn(2+) contacts are provided by Cys300, Cys302, Cys305, and His331.

The protein belongs to the queuine tRNA-ribosyltransferase family. As to quaternary structure, homodimer. Within each dimer, one monomer is responsible for RNA recognition and catalysis, while the other monomer binds to the replacement base PreQ1. Requires Zn(2+) as cofactor.

The enzyme catalyses 7-aminomethyl-7-carbaguanine + guanosine(34) in tRNA = 7-aminomethyl-7-carbaguanosine(34) in tRNA + guanine. It functions in the pathway tRNA modification; tRNA-queuosine biosynthesis. Functionally, catalyzes the base-exchange of a guanine (G) residue with the queuine precursor 7-aminomethyl-7-deazaguanine (PreQ1) at position 34 (anticodon wobble position) in tRNAs with GU(N) anticodons (tRNA-Asp, -Asn, -His and -Tyr). Catalysis occurs through a double-displacement mechanism. The nucleophile active site attacks the C1' of nucleotide 34 to detach the guanine base from the RNA, forming a covalent enzyme-RNA intermediate. The proton acceptor active site deprotonates the incoming PreQ1, allowing a nucleophilic attack on the C1' of the ribose to form the product. After dissociation, two additional enzymatic reactions on the tRNA convert PreQ1 to queuine (Q), resulting in the hypermodified nucleoside queuosine (7-(((4,5-cis-dihydroxy-2-cyclopenten-1-yl)amino)methyl)-7-deazaguanosine). The chain is Queuine tRNA-ribosyltransferase from Pseudoalteromonas atlantica (strain T6c / ATCC BAA-1087).